The sequence spans 570 residues: Mitogen-activated protein kinase 11 (570 aa).

A Protein kinase domain is found at 26–317 (YEVLEVIGKG…AQEALADPYF (292 aa)). ATP is bound by residues 32 to 40 (IGKGSYGLV) and Lys55. Asp152 (proton acceptor) is an active-site residue. Position 188 is a phosphothreonine (Thr188). The short motif at 188 to 190 (TDY) is the TXY element. Tyr190 is subject to Phosphotyrosine.

It belongs to the protein kinase superfamily. CMGC Ser/Thr protein kinase family. MAP kinase subfamily. In terms of processing, dually phosphorylated on Thr-188 and Tyr-190, which activates the enzyme.

The enzyme catalyses L-seryl-[protein] + ATP = O-phospho-L-seryl-[protein] + ADP + H(+). The catalysed reaction is L-threonyl-[protein] + ATP = O-phospho-L-threonyl-[protein] + ADP + H(+). Activated by threonine and tyrosine phosphorylation. The chain is Mitogen-activated protein kinase 11 (MPK11) from Oryza sativa subsp. japonica (Rice).